The primary structure comprises 393 residues: S-adenosylmethionine synthase (393 aa).

Glu9 contacts Mg(2+). Position 15 (His15) interacts with ATP. A K(+)-binding site is contributed by Glu43. Residues Glu56 and Gln99 each contribute to the L-methionine site. ATP contacts are provided by residues Asp167 to Lys169, Ser235 to Phe238, Asp246, Arg252 to Lys253, Ala269, Lys273, and Lys277. Asp246 lines the L-methionine pocket. Lys277 is an L-methionine binding site.

This sequence belongs to the AdoMet synthase family. In terms of assembly, homotetramer. Mn(2+) is required as a cofactor. The cofactor is Mg(2+). It depends on Co(2+) as a cofactor. Requires K(+) as cofactor.

Its subcellular location is the cytoplasm. It carries out the reaction L-methionine + ATP + H2O = S-adenosyl-L-methionine + phosphate + diphosphate. It functions in the pathway amino-acid biosynthesis; S-adenosyl-L-methionine biosynthesis; S-adenosyl-L-methionine from L-methionine: step 1/1. In terms of biological role, catalyzes the formation of S-adenosylmethionine from methionine and ATP. The reaction comprises two steps that are both catalyzed by the same enzyme: formation of S-adenosylmethionine (AdoMet) and triphosphate, and subsequent hydrolysis of the triphosphate. This Gossypium hirsutum (Upland cotton) protein is S-adenosylmethionine synthase (SAMS).